Here is a 346-residue protein sequence, read N- to C-terminus: NADP-dependent alcohol dehydrogenase C (346 aa).

Residues Cys-41, His-63, Cys-94, Cys-97, Cys-100, Cys-108, and Cys-158 each contribute to the Zn(2+) site.

The protein belongs to the zinc-containing alcohol dehydrogenase family. Requires Zn(2+) as cofactor.

The enzyme catalyses a primary alcohol + NADP(+) = an aldehyde + NADPH + H(+). The chain is NADP-dependent alcohol dehydrogenase C (adhC) from Mycobacterium bovis (strain ATCC BAA-935 / AF2122/97).